A 143-amino-acid chain; its full sequence is Interleukin-4 (143 aa).

Residues 1-19 (MGLSPQLAAVLLCLLVCTG) form the signal peptide. Cystine bridges form between Cys-48–Cys-88 and Cys-70–Cys-115. N-linked (GlcNAc...) asparagine glycosylation is found at Asn-62 and Asn-91.

It belongs to the IL-4/IL-13 family.

The protein localises to the secreted. Its function is as follows. Participates in at least several B-cell activation processes as well as of other cell types. It is a costimulator of DNA-synthesis. It induces the expression of class II MHC molecules on resting B-cells. It enhances both secretion and cell surface expression of IgE and IgG1. It also regulates the expression of the low affinity Fc receptor for IgE (CD23) on both lymphocytes and monocytes. Positively regulates IL31RA expression in macrophages. Stimulates autophagy in dendritic cells by interfering with mTORC1 signaling and through the induction of RUFY4. In Meriones unguiculatus (Mongolian jird), this protein is Interleukin-4 (IL4).